The following is a 414-amino-acid chain: Esterase FrsA (414 aa).

This sequence belongs to the FrsA family.

It carries out the reaction a carboxylic ester + H2O = an alcohol + a carboxylate + H(+). Its function is as follows. Catalyzes the hydrolysis of esters. The sequence is that of Esterase FrsA from Citrobacter koseri (strain ATCC BAA-895 / CDC 4225-83 / SGSC4696).